We begin with the raw amino-acid sequence, 365 residues long: Short-chain dehydrogenase iccH (365 aa).

Residues Leu-16, Arg-52, and Asp-70 each coordinate NADP(+). Asn-90 carries an N-linked (GlcNAc...) asparagine glycan. Residues Asn-102, Tyr-221, Lys-225, and Ser-260 each contribute to the NADP(+) site. The active-site Proton donor is the Tyr-221. Residue Lys-225 is the Lowers pKa of active site Tyr of the active site. The helical transmembrane segment at 267–287 (IWVMFLLMKFVLPLLAPLAVW) threads the bilayer. Asn-291 and Asn-324 each carry an N-linked (GlcNAc...) asparagine glycan.

It belongs to the short-chain dehydrogenases/reductases (SDR) family.

It localises to the membrane. The protein operates within mycotoxin biosynthesis. Functionally, NADH-dependent flavin oxidoreductase; part of the gene cluster that mediates the biosynthesis of ilicicolin H, a 4-hydroxy-2-pyridonealkaloid that has potent and broad antifungal activities by inhibiting the mitochondrial respiration chain. IccA to iccE are sufficient for ilicicolin H biosynthesis and the roles of the remaining enzymes, iccF, iccG and iccH within the pathway have still to be determined. The biosynthesis of ilicicolin H starts with formation of the tetramic acid by the hybrid PKS-NRPS synthetase iccA with the partnering trans-enoyl reductase iccB since iccA lacks a designated enoylreductase (ER) domain. The cytochrome P450 monooxygenase iccC then catalyzes the ring expansion of the tetramate to the acyclic 2-pyridone. The pericyclase iccD further converts the acyclic 2-pyridone into 8-epi-ilicicolin H. Finally, the epimerase iccE converts 8-epi-ilicicolin H into ilicicolin H via epimerizationd. The protein is Short-chain dehydrogenase iccH of Talaromyces variabilis (Penicillium variabile).